Here is a 260-residue protein sequence, read N- to C-terminus: Global transcriptional regulator CodY (260 aa).

The tract at residues methionine 1–leucine 159 is GAF domain. Residues alanine 207–arginine 226 constitute a DNA-binding region (H-T-H motif).

The protein belongs to the CodY family.

It localises to the cytoplasm. Its function is as follows. DNA-binding global transcriptional regulator which is involved in the adaptive response to starvation and acts by directly or indirectly controlling the expression of numerous genes in response to nutrient availability. During rapid exponential growth, CodY is highly active and represses genes whose products allow adaptation to nutrient depletion. This chain is Global transcriptional regulator CodY, found in Streptococcus equi subsp. equi (strain 4047).